The chain runs to 223 residues: Large ribosomal subunit protein uL3 (223 aa).

This sequence belongs to the universal ribosomal protein uL3 family. Part of the 50S ribosomal subunit. Forms a cluster with proteins L14 and L19.

In terms of biological role, one of the primary rRNA binding proteins, it binds directly near the 3'-end of the 23S rRNA, where it nucleates assembly of the 50S subunit. This is Large ribosomal subunit protein uL3 from Mycoplasma capricolum subsp. capricolum (strain California kid / ATCC 27343 / NCTC 10154).